The chain runs to 483 residues: ATP synthase subunit beta (483 aa).

169 to 176 is a binding site for ATP; the sequence is GGAGVGKT.

It belongs to the ATPase alpha/beta chains family. F-type ATPases have 2 components, CF(1) - the catalytic core - and CF(0) - the membrane proton channel. CF(1) has five subunits: alpha(3), beta(3), gamma(1), delta(1), epsilon(1). CF(0) has three main subunits: a(1), b(2) and c(9-12). The alpha and beta chains form an alternating ring which encloses part of the gamma chain. CF(1) is attached to CF(0) by a central stalk formed by the gamma and epsilon chains, while a peripheral stalk is formed by the delta and b chains.

Its subcellular location is the cell membrane. It catalyses the reaction ATP + H2O + 4 H(+)(in) = ADP + phosphate + 5 H(+)(out). In terms of biological role, produces ATP from ADP in the presence of a proton gradient across the membrane. The catalytic sites are hosted primarily by the beta subunits. In Rhodococcus jostii (strain RHA1), this protein is ATP synthase subunit beta.